A 420-amino-acid polypeptide reads, in one-letter code: Gamma-glutamyl phosphate reductase (420 aa).

Belongs to the gamma-glutamyl phosphate reductase family.

It localises to the cytoplasm. It catalyses the reaction L-glutamate 5-semialdehyde + phosphate + NADP(+) = L-glutamyl 5-phosphate + NADPH + H(+). It participates in amino-acid biosynthesis; L-proline biosynthesis; L-glutamate 5-semialdehyde from L-glutamate: step 2/2. In terms of biological role, catalyzes the NADPH-dependent reduction of L-glutamate 5-phosphate into L-glutamate 5-semialdehyde and phosphate. The product spontaneously undergoes cyclization to form 1-pyrroline-5-carboxylate. In Shewanella denitrificans (strain OS217 / ATCC BAA-1090 / DSM 15013), this protein is Gamma-glutamyl phosphate reductase.